We begin with the raw amino-acid sequence, 336 residues long: Ribosomal RNA large subunit methyltransferase F (336 aa).

Belongs to the methyltransferase superfamily. METTL16/RlmF family.

Its subcellular location is the cytoplasm. It carries out the reaction adenosine(1618) in 23S rRNA + S-adenosyl-L-methionine = N(6)-methyladenosine(1618) in 23S rRNA + S-adenosyl-L-homocysteine + H(+). Functionally, specifically methylates the adenine in position 1618 of 23S rRNA. In Yersinia pseudotuberculosis serotype I (strain IP32953), this protein is Ribosomal RNA large subunit methyltransferase F.